A 198-amino-acid polypeptide reads, in one-letter code: Phosphoheptose isomerase (198 aa).

Residues 36–195 (AIEVYQNGNK…EEAIFRNKFV (160 aa)) form the SIS domain. 51–53 (NGG) is a substrate binding site. The Zn(2+) site is built by His-60 and Glu-64. Residues Glu-64, 93–94 (ND), 119–121 (STS), Ser-124, and Gln-171 each bind substrate. 2 residues coordinate Zn(2+): Gln-171 and His-179.

This sequence belongs to the SIS family. GmhA subfamily. Requires Zn(2+) as cofactor.

It is found in the cytoplasm. The catalysed reaction is 2 D-sedoheptulose 7-phosphate = D-glycero-alpha-D-manno-heptose 7-phosphate + D-glycero-beta-D-manno-heptose 7-phosphate. The protein operates within carbohydrate biosynthesis; D-glycero-D-manno-heptose 7-phosphate biosynthesis; D-glycero-alpha-D-manno-heptose 7-phosphate and D-glycero-beta-D-manno-heptose 7-phosphate from sedoheptulose 7-phosphate: step 1/1. It participates in cell surface structure biogenesis; S-layer biogenesis. In terms of biological role, catalyzes the isomerization of sedoheptulose 7-phosphate in D-glycero-D-manno-heptose 7-phosphate. In Aneurinibacillus thermoaerophilus, this protein is Phosphoheptose isomerase.